Reading from the N-terminus, the 564-residue chain is Nucleoprotein (564 aa).

A binding site for the cap structure m7GTP region spans residues 54–236; the sequence is LRKNKRGEED…VTKDESSINI (183 aa). Aspartate 380 and glutamate 382 together coordinate Mn(2+). Zn(2+)-binding residues include glutamate 390, cysteine 497, histidine 500, and cysteine 525. Aspartate 529 contributes to the Mn(2+) binding site.

This sequence belongs to the arenaviridae nucleocapsid protein family. As to quaternary structure, homomultimerizes to form the nucleocapsid. Binds to viral genomic RNA. Interacts with glycoprotein G2. Interacts with protein Z; this interaction probably directs the encapsidated genome to budding sites. Interacts with protein L; this interaction does not interfere with Z-L interaction. Interacts with host IKBKE (via Protein kinase domain); the interaction inhibits IKBKE kinase activity.

The protein resides in the virion. Its subcellular location is the host cytoplasm. In terms of biological role, encapsidates the genome, protecting it from nucleases. The encapsidated genomic RNA is termed the nucleocapsid (NC). Serves as template for viral transcription and replication. The increased presence of protein N in host cell does not seem to trigger the switch from transcription to replication as observed in other negative strain RNA viruses. Through the interaction with host IKBKE, strongly inhibits the phosphorylation and nuclear translocation of host IRF3, a protein involved in interferon activation pathway, leading to the inhibition of interferon-beta and IRF3-dependent promoters activation. Also encodes a functional 3'-5' exoribonuclease that degrades preferentially dsRNA substrates and thereby participates in the suppression of interferon induction. This is Nucleoprotein from Calomys callosus (Large vesper mouse).